We begin with the raw amino-acid sequence, 316 residues long: Coiled-coil domain-containing protein 130 homolog (316 aa).

A coiled-coil region spans residues 182-203 (ANSRLRAEFRQQKKEINGQQEL). A disordered region spans residues 287 to 316 (KLEETTSSATNEKPISLVGDYSSSDNDSNG).

The protein belongs to the CWC16 family.

The chain is Coiled-coil domain-containing protein 130 homolog from Drosophila melanogaster (Fruit fly).